A 318-amino-acid chain; its full sequence is Melanoma-associated antigen 8 (318 aa).

Residues 1-103 (MLLGQKSQRY…GPSTSPDPAH (103 aa)) form a disordered region. The 200-residue stretch at 112 to 311 (LDEKVAELVR…ISYPSLHEEA (200 aa)) folds into the MAGE domain.

As to expression, expressed in many tumors of several types, such as melanoma, head and neck squamous cell carcinoma, lung carcinoma and breast carcinoma, but not in normal tissues except for testis and placenta.

In terms of biological role, not known, though may play a role in embryonal development and tumor transformation or aspects of tumor progression. This Homo sapiens (Human) protein is Melanoma-associated antigen 8 (MAGEA8).